We begin with the raw amino-acid sequence, 914 residues long: Protein translocase subunit SecA (914 aa).

Residues Gln-87, Gly-105 to Thr-109, and Asp-500 contribute to the ATP site. Positions 898, 900, 909, and 910 each coordinate Zn(2+).

Belongs to the SecA family. In terms of assembly, monomer and homodimer. Part of the essential Sec protein translocation apparatus which comprises SecA, SecYEG and auxiliary proteins SecDF-YajC and YidC. Zn(2+) is required as a cofactor.

The protein localises to the cell inner membrane. It is found in the cytoplasm. The catalysed reaction is ATP + H2O + cellular proteinSide 1 = ADP + phosphate + cellular proteinSide 2.. Its function is as follows. Part of the Sec protein translocase complex. Interacts with the SecYEG preprotein conducting channel. Has a central role in coupling the hydrolysis of ATP to the transfer of proteins into and across the cell membrane, serving as an ATP-driven molecular motor driving the stepwise translocation of polypeptide chains across the membrane. This Acidithiobacillus ferrooxidans (strain ATCC 23270 / DSM 14882 / CIP 104768 / NCIMB 8455) (Ferrobacillus ferrooxidans (strain ATCC 23270)) protein is Protein translocase subunit SecA.